We begin with the raw amino-acid sequence, 337 residues long: 2-oxoglutarate-dependent dioxygenase frbA (337 aa).

Positions 175 to 290 constitute a Fe2OG dioxygenase domain; the sequence is CSAELRLNHY…RHSLAYFGKP (116 aa). Fe cation contacts are provided by His202, Asp204, and His262. Residue Arg281 participates in 2-oxoglutarate binding.

This sequence belongs to the iron/ascorbate-dependent oxidoreductase family. The cofactor is Fe(2+).

The protein operates within antifungal biosynthesis. 2-oxoglutarate-dependent dioxygenase; part of the gene cluster that mediates the biosynthesis of the antifungal antibiotic FR901469, an inhibitor of beta-1,3-glucansynthase, exerting antifungal activity against the pathogenes Candida albicans and Aspergillus fumigatus. FR901469 is a cyclic depsipeptide containing 12 amino acid residues and a fatty acid chain. The NRPS frbI contains 12 modules responsible for the formation of the depsipeptide backbone which is denoted as Acyl-Thr-Ala-Tyr-Val-4OHPro-Thr-Thr-3OHPro-threo3OHGln-Gly-Thr-Orn-OH (C71H116N14O23). The PKS frbB is probably involved in the production of the hydrocarbon chain, and the acyl-CoA ligase frbC might be involved in the transport of the chain to the peptide ptoduct of frbI. Because FR901469 contains 3 hydroxylated amino acid residues, the 3 oxygenases frbA, frbH, and frbJ might be participating in amino acid hydroxylation. As no thioesterase domains were detected in frbI or frbB, the thioesterases frbD and frbE may instead release and cyclize the products of the NRPS and PKS, respectively. The sequence is that of 2-oxoglutarate-dependent dioxygenase frbA from Dothideomycetidae sp. (strain 11243) (Fungal sp. (strain No.11243)).